A 96-amino-acid chain; its full sequence is NADH-ubiquinone oxidoreductase chain 4L (96 aa).

The next 3 helical transmembrane spans lie at 1-21, 27-47, and 61-81; these read MELM…ALSL, MLAL…LVMF, and IILL…VVAI.

Belongs to the complex I subunit 4L family.

The protein localises to the mitochondrion membrane. The catalysed reaction is a ubiquinone + NADH + 5 H(+)(in) = a ubiquinol + NAD(+) + 4 H(+)(out). Functionally, core subunit of the mitochondrial membrane respiratory chain NADH dehydrogenase (Complex I) which catalyzes electron transfer from NADH through the respiratory chain, using ubiquinone as an electron acceptor. Part of the enzyme membrane arm which is embedded in the lipid bilayer and involved in proton translocation. This Lycodon semicarinatus (Ryukyu odd-tooth snake) protein is NADH-ubiquinone oxidoreductase chain 4L (MT-ND4L).